Reading from the N-terminus, the 418-residue chain is Serine/threonine-protein kinase Sgk1 (418 aa).

Positions 50 to 78 (PQEPELLNENSSPPPSPSQQINLGPSSNP) are disordered. Positions 68–78 (QQINLGPSSNP) are enriched in polar residues. In terms of domain architecture, Protein kinase spans 85–342 (FQFLKIIGKG…FMEIKNHMFF (258 aa)). ATP is bound by residues 91-99 (IGKGSFGKV) and Lys-114. The active-site Proton acceptor is Asp-209. The 76-residue stretch at 343-418 (SPINWDDLIN…SYAPPMESYL (76 aa)) folds into the AGC-kinase C-terminal domain.

It belongs to the protein kinase superfamily. AGC Ser/Thr protein kinase family.

It localises to the cytoplasm. Its subcellular location is the nucleus. The protein resides in the endoplasmic reticulum. It carries out the reaction L-seryl-[protein] + ATP = O-phospho-L-seryl-[protein] + ADP + H(+). The catalysed reaction is L-threonyl-[protein] + ATP = O-phospho-L-threonyl-[protein] + ADP + H(+). Its function is as follows. Protein kinase that may play an important role in cellular stress response. Plays an important role in activating certain potassium, sodium, and chloride channels, suggesting an involvement in the regulation of processes such as cell survival, neuronal excitability, and renal sodium excretion. This Xenopus tropicalis (Western clawed frog) protein is Serine/threonine-protein kinase Sgk1 (sgk1).